A 258-amino-acid chain; its full sequence is Pimeloyl-[acyl-carrier protein] methyl ester esterase (258 aa).

Positions 16–242 constitute an AB hydrolase-1 domain; sequence LVLLHGWGLN…AAHAPFISHP (227 aa). Substrate-binding positions include Trp-22, 82 to 83, and 143 to 147; these read SM and FLALQ. Ser-82 functions as the Nucleophile in the catalytic mechanism. Catalysis depends on residues Asp-207 and His-235. His-235 is a substrate binding site.

The protein belongs to the AB hydrolase superfamily. Carboxylesterase BioH family. In terms of assembly, monomer.

Its subcellular location is the cytoplasm. It catalyses the reaction 6-carboxyhexanoyl-[ACP] methyl ester + H2O = 6-carboxyhexanoyl-[ACP] + methanol + H(+). It functions in the pathway cofactor biosynthesis; biotin biosynthesis. The physiological role of BioH is to remove the methyl group introduced by BioC when the pimeloyl moiety is complete. It allows to synthesize pimeloyl-ACP via the fatty acid synthetic pathway through the hydrolysis of the ester bonds of pimeloyl-ACP esters. The protein is Pimeloyl-[acyl-carrier protein] methyl ester esterase of Yersinia pseudotuberculosis serotype IB (strain PB1/+).